The sequence spans 418 residues: Secreted aspartic protease 6 (418 aa).

Residues 1–18 form the signal peptide; it reads MFLKNILSVLRFALLIDA. Residues 19 to 76 constitute a propeptide, activation peptide; the sequence is APVKRSPGFVTLDFNVKRSLVVPDDPTAESKRSPLFLDLDPTQIPVDDTGRNVGVDKR. The Peptidase A1 domain maps to 90-404; that stretch reads YSADITVGSN…DLDDKKISMA (315 aa). The active site involves Asp108. Residue 108–110 coordinates pepstatin A; it reads DTG. A disulfide bridge connects residues Cys123 and Cys135. The N-linked (GlcNAc...) asparagine glycan is linked to Asn138. Asp268 provides a ligand contact to Zn(2+). Residue Asp294 is part of the active site. 294–298 is a pepstatin A binding site; the sequence is DSGTT. The cysteines at positions 332 and 370 are disulfide-linked.

Belongs to the peptidase A1 family.

Its subcellular location is the secreted. It carries out the reaction Preferential cleavage at the carboxyl of hydrophobic amino acids, but fails to cleave 15-Leu-|-Tyr-16, 16-Tyr-|-Leu-17 and 24-Phe-|-Phe-25 of insulin B chain. Activates trypsinogen, and degrades keratin.. Its activity is regulated as follows. Inhibited by pepstatin A analogs. Its function is as follows. Secreted aspartic peptidases (SAPs) are a group of ten acidic hydrolases considered as key virulence factors. These enzymes supply the fungus with nutrient amino acids as well as are able to degrade the selected host's proteins involved in the immune defense. Moreover, acts toward human hemoglobin though limited proteolysis to generate a variety of antimicrobial hemocidins, enabling to compete with the other microorganisms of the same physiological niche using the microbicidal peptides generated from the host protein. This Candida albicans (Yeast) protein is Secreted aspartic protease 6.